A 448-amino-acid polypeptide reads, in one-letter code: Phosphoglucosamine mutase (448 aa).

The Phosphoserine intermediate role is filled by Ser100. Positions 100, 240, 242, and 244 each coordinate Mg(2+). Ser100 is modified (phosphoserine).

This sequence belongs to the phosphohexose mutase family. It depends on Mg(2+) as a cofactor. Post-translationally, activated by phosphorylation.

The catalysed reaction is alpha-D-glucosamine 1-phosphate = D-glucosamine 6-phosphate. Its function is as follows. Catalyzes the conversion of glucosamine-6-phosphate to glucosamine-1-phosphate. This chain is Phosphoglucosamine mutase, found in Clostridium tetani (strain Massachusetts / E88).